The following is a 523-amino-acid chain: Glycerate kinase (523 aa).

Residue S60 is modified to Phosphoserine. The residue at position 200 (K200) is an N6-acetyllysine.

Belongs to the glycerate kinase type-2 family. Expressed in the hippocampus, callus, brain, cerebellum, renal cortex interstitial cells, epithelium of interlobular bile duct and skeletal muscle.

It is found in the cytoplasm. It carries out the reaction (R)-glycerate + ATP = (2R)-3-phosphoglycerate + ADP + H(+). In Mus musculus (Mouse), this protein is Glycerate kinase (Glyctk).